A 612-amino-acid chain; its full sequence is Elongation factor 4 (612 aa).

The region spanning 11–193 (NHIRNFSIVA…KIVTDIPAPS (183 aa)) is the tr-type G domain. GTP contacts are provided by residues 23–28 (DHGKST) and 140–143 (NKID).

The protein belongs to the TRAFAC class translation factor GTPase superfamily. Classic translation factor GTPase family. LepA subfamily.

The protein localises to the cell membrane. The enzyme catalyses GTP + H2O = GDP + phosphate + H(+). In terms of biological role, required for accurate and efficient protein synthesis under certain stress conditions. May act as a fidelity factor of the translation reaction, by catalyzing a one-codon backward translocation of tRNAs on improperly translocated ribosomes. Back-translocation proceeds from a post-translocation (POST) complex to a pre-translocation (PRE) complex, thus giving elongation factor G a second chance to translocate the tRNAs correctly. Binds to ribosomes in a GTP-dependent manner. The polypeptide is Elongation factor 4 (Lactobacillus acidophilus (strain ATCC 700396 / NCK56 / N2 / NCFM)).